A 191-amino-acid polypeptide reads, in one-letter code: Ribosomal RNA small subunit methyltransferase G (191 aa).

Residues Gly-62, Phe-67, Ile-111–Glu-112, and Arg-124 contribute to the S-adenosyl-L-methionine site.

It belongs to the methyltransferase superfamily. RNA methyltransferase RsmG family.

It localises to the cytoplasm. The catalysed reaction is guanosine(527) in 16S rRNA + S-adenosyl-L-methionine = N(7)-methylguanosine(527) in 16S rRNA + S-adenosyl-L-homocysteine. Its function is as follows. Specifically methylates the N7 position of guanine in position 527 of 16S rRNA. This Rickettsia typhi (strain ATCC VR-144 / Wilmington) protein is Ribosomal RNA small subunit methyltransferase G.